The sequence spans 365 residues: Peptide chain release factor 2 (365 aa).

Residue Q252 is modified to N5-methylglutamine.

The protein belongs to the prokaryotic/mitochondrial release factor family. In terms of processing, methylated by PrmC. Methylation increases the termination efficiency of RF2.

It is found in the cytoplasm. Functionally, peptide chain release factor 2 directs the termination of translation in response to the peptide chain termination codons UGA and UAA. The sequence is that of Peptide chain release factor 2 (prfB) from Salmonella typhimurium (strain LT2 / SGSC1412 / ATCC 700720).